The sequence spans 113 residues: Hydrogenase maturation factor HybF (113 aa).

Ni(2+) is bound by residues His2 and Glu3. Positions 73, 76, 89, and 92 each coordinate Zn(2+).

Belongs to the HypA/HybF family. HybF subfamily. As to quaternary structure, monomer.

Involved in the maturation of [NiFe] hydrogenases. Required for nickel insertion into the metal center of the hydrogenase. HybF is involved in maturation of hydrogenases 1 and 2. It may partially substitute for the function of HypA and vice versa. This chain is Hydrogenase maturation factor HybF, found in Escherichia coli (strain K12).